The chain runs to 197 residues: MSGSSRRLLWAATCLAVLCVSAAQPNITTLAPNVTEVPTTTTKVVPTTQMPTVLPETCASFNSCVSCVNATFTNNITCFWLHCQEANKTYCANEPLSNCSQVNRTDLCSVIPPTTPVPTNSTAKPTTRPSSPTPTPSVVTSAGTTNTTLTPTSQPERKSTFDAASFIGGIVLVLGVQAVIFFLYKFCKSKERNYHTL.

The signal sequence occupies residues 1 to 23 (MSGSSRRLLWAATCLAVLCVSAA). The Extracellular segment spans residues 24-162 (QPNITTLAPN…SQPERKSTFD (139 aa)). Residues asparagine 26, asparagine 33, asparagine 69, asparagine 75, asparagine 87, asparagine 98, asparagine 103, asparagine 120, and asparagine 146 are each glycosylated (N-linked (GlcNAc...) asparagine). Positions 116 to 156 (PVPTNSTAKPTTRPSSPTPTPSVVTSAGTTNTTLTPTSQPE) are disordered. A compositionally biased stretch (low complexity) spans 121-152 (STAKPTTRPSSPTPTPSVVTSAGTTNTTLTPT). Residues 163–183 (AASFIGGIVLVLGVQAVIFFL) form a helical membrane-spanning segment. Topologically, residues 184 to 197 (YKFCKSKERNYHTL) are cytoplasmic. A required for endosomal and lysosomal localization region spans residues 191–197 (ERNYHTL).

It belongs to the CD164 family. As to quaternary structure, interacts with CXCR4. Highly N- and O-glycosylated; contains sialic acid. In terms of tissue distribution, expressed at high levels in the submaxillary gland and kidney, at moderate levels in the brain, heart, lung, liver, intestine, testis, muscle and bone marrow, and at low levels in the pancreas, spleen and thymus. In the ear, expressed in the inner and outer hair cells of the organ of Corti, cells of Kolliker's organ, cells in the lateral cochlear wall behind the spiral prominence and cells of the stria vascularis.

It localises to the lysosome membrane. The protein localises to the endosome membrane. The protein resides in the cell membrane. Its function is as follows. Sialomucin that may play a key role in hematopoiesis. May be involved in cell adhesion. Promotes myogenesis by enhancing CXCR4-dependent cell motility. Positively regulates myoblast migration and promotes myoblast fusion into myotubes. This Mus musculus (Mouse) protein is Sialomucin core protein 24 (Cd164).